The chain runs to 198 residues: MNIKNLNQIPIVVEQSARGERAYDIYSRLLKERIIFLVGPIEDYMANVVVAQLLFLESENPDKDIHLYINSPGGSVSAGLAIYDTMQFIKSDISTLCIGQAASMGALLLTAGTKGKRFALPNVRCMIHQPLGGFSGQASDVDIHAQEILKVRANLNQIFKLHTGQVIKTIQKDTDRDNFMSADEATKYGLIDKVLAKR.

The Nucleophile role is filled by serine 103. Histidine 128 is an active-site residue.

It belongs to the peptidase S14 family. As to quaternary structure, fourteen ClpP subunits assemble into 2 heptameric rings which stack back to back to give a disk-like structure with a central cavity, resembling the structure of eukaryotic proteasomes.

It localises to the cytoplasm. It carries out the reaction Hydrolysis of proteins to small peptides in the presence of ATP and magnesium. alpha-casein is the usual test substrate. In the absence of ATP, only oligopeptides shorter than five residues are hydrolyzed (such as succinyl-Leu-Tyr-|-NHMec, and Leu-Tyr-Leu-|-Tyr-Trp, in which cleavage of the -Tyr-|-Leu- and -Tyr-|-Trp bonds also occurs).. In terms of biological role, cleaves peptides in various proteins in a process that requires ATP hydrolysis. Has a chymotrypsin-like activity. Plays a major role in the degradation of misfolded proteins. The sequence is that of ATP-dependent Clp protease proteolytic subunit from Vesicomyosocius okutanii subsp. Calyptogena okutanii (strain HA).